A 138-amino-acid chain; its full sequence is DNA-directed RNA polymerase II subunit 4 (138 aa).

Position 2 is an N-acetylserine (serine 2).

Belongs to the eukaryotic RPB4 RNA polymerase subunit family. As to quaternary structure, component of the RNA polymerase II complex consisting of at least 12 subunits. Interacts with NRPB7.

Its subcellular location is the nucleus. Functionally, DNA-dependent RNA polymerase catalyzes the transcription of DNA into RNA using the four ribonucleoside triphosphates as substrates. Second largest component of RNA polymerase II which synthesizes mRNA precursors and many functional non-coding RNAs. Proposed to contribute to the polymerase catalytic activity and forms the polymerase active center together with the largest subunit. Pol II is the central component of the basal RNA polymerase II transcription machinery. It is composed of mobile elements that move relative to each other. The protein is DNA-directed RNA polymerase II subunit 4 (NRPB4) of Arabidopsis thaliana (Mouse-ear cress).